Reading from the N-terminus, the 156-residue chain is Cellulose synthase operon protein D (156 aa).

The protein operates within glycan metabolism; bacterial cellulose biosynthesis. May have a major role in the perfection of crystallization, involved either in the pore structure itself or in the organization of the pores within the linear array of terminal synthesizing complexes (TCs). This Komagataeibacter xylinus (Gluconacetobacter xylinus) protein is Cellulose synthase operon protein D (bcsDI).